The chain runs to 347 residues: E3 ubiquitin-protein ligase RNF146-B (347 aa).

The segment at 37–75 (CAICLQTCVHPVSLPCKHVFCYLCVKGASWLGKRCALCR) adopts an RING-type zinc-finger fold. Residues Lys-85, Lys-95, Lys-131, and Lys-176 each participate in a glycyl lysine isopeptide (Lys-Gly) (interchain with G-Cter in ubiquitin) cross-link. Residues 92-168 (EELKAASRGN…EHGRRRKIKR (77 aa)) enclose the WWE domain. 2 disordered regions span residues 196–241 (SSAD…GTSL) and 257–347 (ERSH…VTEV). Residues 203-217 (SVPAQSGASVQSSSV) are compositionally biased toward low complexity. The span at 282-296 (SIEETESDASSDSED) shows a compositional bias: acidic residues. Ser-288 and Ser-292 each carry phosphoserine. The segment covering 304-322 (HSLTQQRLLVPNPSQTVSD) has biased composition (polar residues).

As to quaternary structure, interacts with poly-ADP-ribosylated AXIN1, AXIN2, BLZF1 and CASC3. Ubiquitinated; autoubiquitinated. Autoubiquitination is enhanced upon poly(ADP-ribose)-binding.

The protein localises to the cytoplasm. It is found in the cytosol. The catalysed reaction is S-ubiquitinyl-[E2 ubiquitin-conjugating enzyme]-L-cysteine + [acceptor protein]-L-lysine = [E2 ubiquitin-conjugating enzyme]-L-cysteine + N(6)-ubiquitinyl-[acceptor protein]-L-lysine.. It participates in protein modification; protein ubiquitination. Functionally, E3 ubiquitin-protein ligase that specifically binds poly-ADP-ribosylated proteins and mediates their ubiquitination and subsequent degradation. Acts as an activator of the Wnt signaling pathway by mediating the ubiquitination of poly-ADP-ribosylated AXIN1 and AXIN2, 2 key components of the beta-catenin destruction complex. Acts in cooperation with tankyrase proteins (TNKS and TNKS2), which mediate poly-ADP-ribosylation of target proteins AXIN1, AXIN2, BLZF1, CASC3, TNKS and TNKS2. Recognizes and binds tankyrase-dependent poly-ADP-ribosylated proteins via its WWE domain and mediates their ubiquitination. The polypeptide is E3 ubiquitin-protein ligase RNF146-B (RNF146B) (Bos taurus (Bovine)).